The chain runs to 236 residues: Phosphoglycolate phosphatase (236 aa).

Asp23 acts as the Nucleophile in catalysis. Mg(2+)-binding residues include Asp23 and Asp25. Position 162 (Lys162) interacts with substrate. Residues Asp185 and Asp189 each contribute to the Mg(2+) site.

This sequence belongs to the archaeal SPP-like hydrolase family. Mg(2+) is required as a cofactor.

It catalyses the reaction 2-phosphoglycolate + H2O = glycolate + phosphate. Catalyzes the dephosphorylation of 2-phosphoglycolate. In Picrophilus torridus (strain ATCC 700027 / DSM 9790 / JCM 10055 / NBRC 100828 / KAW 2/3), this protein is Phosphoglycolate phosphatase.